The following is a 3140-amino-acid chain: Genome polyprotein (3140 aa).

The region spanning 165–308 is the Peptidase S30 domain; sequence RMSEASLQLF…KEQSNEIIHY (144 aa). Active-site for P1 proteinase activity residues include histidine 216, aspartate 225, and serine 259. The short motif at 360–363 is the Involved in interaction with stylet and aphid transmission element; it reads KITC. The short motif at 618–620 is the Involved in virions binding and aphid transmission element; that stretch reads PTK. In terms of domain architecture, Peptidase C6 spans 644–766; sequence MFIAKAGYCY…DSNMKTYLVG (123 aa). Residues cysteine 652 and histidine 725 each act as for helper component proteinase activity in the active site. One can recognise a Helicase ATP-binding domain in the interval 1240–1392; it reads EVMHGSHQDI…TQKEVKVIVE (153 aa). 1253 to 1260 lines the ATP pocket; it reads GAVGSGKS. Residues 1342-1345 carry the DECH box motif; that stretch reads DECH. A Helicase C-terminal domain is found at 1411-1570; sequence DILKHGVNVL…GLPVMTNGVS (160 aa). The short motif at 1897 to 1904 is the Nuclear localization signal element; it reads KKGKSKGK. Tyrosine 1919 carries the post-translational modification O-(5'-phospho-RNA)-tyrosine. One can recognise a Peptidase C4 domain in the interval 2050-2268; that stretch reads SKSLFRGLRD…VCWGSLQLKR (219 aa). Residues histidine 2095, aspartate 2130, and cysteine 2200 each act as for nuclear inclusion protein A activity in the active site. The RdRp catalytic domain maps to 2534 to 2658; the sequence is WIYCDADGSQ…AVHPAYESIY (125 aa). O-linked (GlcNAc) threonine; by host glycosylation is found at threonine 2829 and threonine 2834. Serine 2835 carries the phosphoserine modification. O-linked (GlcNAc) threonine; by host glycans are attached at residues threonine 2851, threonine 2863, threonine 2864, and threonine 2868. Serine 2875 carries an O-linked (GlcNAc) serine; by host glycan. Serine 2891, serine 2911, and serine 2928 each carry phosphoserine. Threonine 3064 and threonine 3123 each carry phosphothreonine.

Belongs to the potyviridae genome polyprotein family. Interacts with host eIF4E protein (via cap-binding region); this interaction mediates the translation of the VPg-viral RNA conjugates. Part of a complex that comprises VPg, RNA, host EIF4E and EIF4G; this interaction mediates the translation of the VPg-viral RNA conjugates. Post-translationally, VPg is uridylylated by the polymerase and is covalently attached to the 5'-end of the genomic RNA. This uridylylated form acts as a nucleotide-peptide primer for the polymerase. In terms of processing, genome polyprotein of potyviruses undergoes post-translational proteolytic processing by the main proteinase NIa-pro resulting in the production of at least ten individual proteins. The P1 proteinase and the HC-pro cleave only their respective C-termini autocatalytically. 6K1 is essential for proper proteolytic separation of P3 from CI.

It is found in the host cytoplasmic vesicle. The protein resides in the host nucleus. The protein localises to the virion. The catalysed reaction is RNA(n) + a ribonucleoside 5'-triphosphate = RNA(n+1) + diphosphate. It carries out the reaction Hydrolyzes glutaminyl bonds, and activity is further restricted by preferences for the amino acids in P6 - P1' that vary with the species of potyvirus, e.g. Glu-Xaa-Xaa-Tyr-Xaa-Gln-|-(Ser or Gly) for the enzyme from tobacco etch virus. The natural substrate is the viral polyprotein, but other proteins and oligopeptides containing the appropriate consensus sequence are also cleaved.. It catalyses the reaction Hydrolyzes a Gly-|-Gly bond at its own C-terminus, commonly in the sequence -Tyr-Xaa-Val-Gly-|-Gly, in the processing of the potyviral polyprotein.. Its function is as follows. Required for aphid transmission and also has proteolytic activity. Only cleaves a Gly-Gly dipeptide at its own C-terminus. Interacts with virions and aphid stylets. Acts as a suppressor of RNA-mediated gene silencing, also known as post-transcriptional gene silencing (PTGS), a mechanism of plant viral defense that limits the accumulation of viral RNAs. May have RNA-binding activity. Functionally, has helicase activity. It may be involved in replication. Indispensable for virus replication. Reduces the abundance of host transcripts related to jasmonic acid biosynthesis therefore altering the host defenses. In order to increase its own stability, decreases host protein degradation pathways. In terms of biological role, indispensable for virus replication. Its function is as follows. Mediates the cap-independent, EIF4E-dependent translation of viral genomic RNAs. Binds to the cap-binding site of host EIF4E and thus interferes with the host EIF4E-dependent mRNA export and translation. VPg-RNA directly binds EIF4E and is a template for transcription. Also forms trimeric complexes with EIF4E-EIF4G, which are templates for translation. Functionally, has RNA-binding and proteolytic activities. An RNA-dependent RNA polymerase that plays an essential role in the virus replication. In terms of biological role, involved in aphid transmission, cell-to-cell and systemis movement, encapsidation of the viral RNA and in the regulation of viral RNA amplification. This Prunus armeniaca (Apricot) protein is Genome polyprotein.